Consider the following 163-residue polypeptide: Epididymal-specific lipocalin-6 (163 aa).

The N-terminal stretch at Met-1–Ala-20 is a signal peptide.

This sequence belongs to the calycin superfamily. Lipocalin family. As to expression, predominantly expressed in epididymis.

It localises to the secreted. May play a role in male fertility. The chain is Epididymal-specific lipocalin-6 (LCN6) from Homo sapiens (Human).